Here is a 409-residue protein sequence, read N- to C-terminus: Broad specificity amino-acid racemase (409 aa).

The first 23 residues, 1 to 23 (MPFSRTLLALSLGMALLQNPAFA), serve as a signal peptide directing secretion. Residues Cys70 and Cys96 are joined by a disulfide bond. Lys74 functions as the Proton acceptor in the catalytic mechanism. Residue Lys74 is modified to N6-(pyridoxal phosphate)lysine. Residue Arg173 coordinates substrate. Tyr300 serves as the catalytic Proton acceptor. Met348 contacts substrate.

It belongs to the alanine racemase family. Bsr subfamily. As to quaternary structure, homodimer. Pyridoxal 5'-phosphate serves as cofactor.

Its subcellular location is the periplasm. It catalyses the reaction an L-alpha-amino acid = a D-alpha-amino acid. It carries out the reaction L-lysine = D-lysine. The catalysed reaction is L-arginine = D-arginine. The enzyme catalyses L-ornithine = D-ornithine. It catalyses the reaction L-alanine = D-alanine. It carries out the reaction L-methionine = D-methionine. Amino-acid racemase able to utilize a broad range of substrates. Is mostly active with lysine and arginine and, to a lesser extent, with ornithine, whereas is about 10 times less active with alanine, methionine and ethionine. With phenylalanine as substrate only a trace activity is detectable, and is inactive with glutamate. Plays a key role in the catabolism of D-arginine and D-lysine, that allows P.taetrolens strain NBRC 3460 to grow on these basic D-amino acids as a sole carbon source. The polypeptide is Broad specificity amino-acid racemase (Pseudomonas taetrolens).